Here is a 142-residue protein sequence, read N- to C-terminus: MVLSAADKTNVKGVFSKIGGHAEEYGAETLERMFIAYPQTKTYFPHFDLSHGSAQIKAHGKKVAAALVEAVNHIDDIAGALSKLSDLHAQKLRVDPVNFKFLGHCFLVVVAIHHPAALTPEVHASLDKFMCAVGAVLTAKYR.

A Globin domain is found at 2–142 (VLSAADKTNV…VGAVLTAKYR (141 aa)). Histidine 59 serves as a coordination point for O2. A heme b-binding site is contributed by histidine 88.

Belongs to the globin family. Heterotetramer of two alpha chains and two beta chains. As to expression, red blood cells.

Involved in oxygen transport from the lung to the various peripheral tissues. The sequence is that of Hemoglobin subunit alpha-A (HBAA) from Anas platyrhynchos platyrhynchos (Northern mallard).